Reading from the N-terminus, the 360-residue chain is LETM1 domain-containing protein 1 (360 aa).

A required and sufficient for mitochondrial import region spans residues 1–110 (MALSRVCWAR…KKARRIKTNM (110 aa)). The Cytoplasmic segment spans residues 1 to 137 (MALSRVCWAR…LRQFRRDVTK (137 aa)). The chain crosses the membrane as a helical span at residues 138–158 (CLFLGILSIPPFANYLVFLLM). At 159–360 (YLFPRQLLIR…LSINYVGSRR (202 aa)) the chain is on the mitochondrial intermembrane side. The Letm1 RBD domain maps to 186 to 360 (LRKQSHPEIL…LSINYVGSRR (175 aa)).

Interacts with BRI3BP. Interacts (via C-terminal) with SMARCA4; the interaction regulates transcriptional expression of thermogenic genes in brown adipose tissue.

It localises to the mitochondrion outer membrane. It is found in the nucleus. The protein localises to the mitochondrion inner membrane. In terms of biological role, plays an essential role for mitochondrial structure and function, as well as thermogenesis of brown adipocytes. In brown adipose tissue also localizes in the nucleus where it interacts with the chromatin remodeler SMARCA4 to regulate thermogenic genes expression, such as UCP1. May regulate phagocytosis and inflammatory responses to lipopolysaccharide in macrophages. Involved in tumorigenesis and may function as a negative regulator of the p53/TP53. In Bos taurus (Bovine), this protein is LETM1 domain-containing protein 1.